Here is a 242-residue protein sequence, read N- to C-terminus: Lysosomal membrane ascorbate-dependent ferrireductase CYB561A3 (242 aa).

At 1 to 4 (MASG) the chain is on the cytoplasmic side. Residues 5 to 25 (WFYLSCMVLGSLGSMCILFTA) form a helical membrane-spanning segment. The Cytochrome b561 domain occupies 12–219 (VLGSLGSMCI…FGLLVLYVLL (208 aa)). Over 26-40 (YWMQYWRGGFAWDGT) the chain is Lumenal. A helical membrane pass occupies residues 41–61 (VLMFNWHPVLMVAGMVVLYGA). Heme b-binding residues include H47 and R67. At 62–81 (ASLVYRLPSSWVGPRLPWKV) the chain is on the cytoplasmic side. R76 and K80 together coordinate L-ascorbate. A helical transmembrane segment spans residues 82-102 (LHAALHLLAFTCTVVGLIAVF). Heme b contacts are provided by residues H83, 112-115 (HLYS), and H117. Over 103–119 (RFHNHSRIAHLYSLHSW) the chain is Lumenal. Residues 120 to 140 (LGITTVVLFACQWFLGFAVFL) traverse the membrane as a helical segment. Residues 141–154 (LPWASQWLRSLLKP) are Cytoplasmic-facing. Position 149 (R149) interacts with L-ascorbate. Residues 155 to 175 (LHVFFGACILSLSITSVISGI) traverse the membrane as a helical segment. Residues H156 and E177 each contribute to the heme b site. Residues 176 to 202 (NEKLFFVLKNATKPYSSLPGEAVFANS) are Lumenal-facing. Residues 203–223 (TGLLVVAFGLLVLYVLLASSW) form a helical membrane-spanning segment. K224 provides a ligand contact to heme b. The Cytoplasmic portion of the chain corresponds to 224-242 (KRPDPGALTDRQPLLHDRE).

Homodimer. Heme b is required as a cofactor. In terms of processing, N-glycosylated. As to expression, present in lung, spleen, thymus and testis. Present at low level in brain, heart, liver and kidney. Expressed in the alveolar macrophages of the lung, in the white pulp of the spleen, widespread in the thymus, and in the Sertoli cells of the testis (at protein level).

It is found in the late endosome membrane. It localises to the lysosome membrane. The catalysed reaction is Fe(3+)(out) + L-ascorbate(in) = monodehydro-L-ascorbate radical(in) + Fe(2+)(out) + H(+). In terms of biological role, transmembrane reductase that uses ascorbate as an electron donor in the cytoplasm and transfers electrons across membranes to reduce iron cations Fe(3+) into Fe(2+) in the lumen of the late endosome and lysosome. Reduced iron can then be extruded from the late endosome and lysosome to the cytoplasm by divalent metal-specific transporters. It is therefore most probably involved in endosomal and lysosomal cellular iron homeostasis. The protein is Lysosomal membrane ascorbate-dependent ferrireductase CYB561A3 of Mus musculus (Mouse).